We begin with the raw amino-acid sequence, 837 residues long: Putative outer membrane protein assembly factor TP_0326 (837 aa).

An N-terminal signal peptide occupies residues 1–21 (MLKKASAFLIASCCVMSLAWA). Over 22-433 (QANDNWYEGK…ILNVEEQSTA (412 aa)) the chain is Periplasmic. POTRA domains are found at residues 31 to 105 (KPIS…VKER), 106 to 182 (PSVK…IQEG), 185 to 273 (TVVS…VVEG), 276 to 354 (YRYG…VVER), and 357 to 430 (SHVE…VEEQ). The chain crosses the membrane as a beta stranded span at residues 434 to 442 (NVQFGVTFS). Residues 443–450 (GVGEAGTF) are Extracellular; loop L1-facing. A beta stranded transmembrane segment spans residues 451–461 (PLSLFCQWEEK). Over 462–468 (NFLGKGN) the chain is Periplasmic. A beta stranded transmembrane segment spans residues 469–476 (EISVNATL). The Extracellular; loop L2 portion of the chain corresponds to 477-478 (GS). A beta stranded membrane pass occupies residues 479–489 (EAQSLKLGYVE). Over 490–499 (RWFLGSPLTV) the chain is Periplasmic. The chain crosses the membrane as a beta stranded span at residues 500–520 (GFDFELTHKNLFVYRAGSYGN). Residues 521-530 (GLPHPYTSRE) are Extracellular; loop L3-facing. A beta stranded transmembrane segment spans residues 531 to 543 (QWASSPGLAESFR). The Periplasmic portion of the chain corresponds to 544–554 (LKYSRFESAIG). A beta stranded transmembrane segment spans residues 555 to 568 (AHTGYQWYPRYAVI). The Extracellular; loop L4 segment spans residues 569–601 (RVNGGVDFRVVKNFYDKDNNQPFDLTVKEQLNW). A beta stranded membrane pass occupies residues 602-615 (TSINSFWTSVSFDG). Over 616-623 (RDFAYDPS) the chain is Periplasmic. A beta stranded membrane pass occupies residues 624 to 636 (SGWFLGQRCTFNG). Topologically, residues 637–644 (LVPFLEKE) are extracellular; loop L5. A beta stranded membrane pass occupies residues 645-658 (HSFRSDTKAEFYVT). The Periplasmic portion of the chain corresponds to 659–667 (LLNYPVSAV). A beta stranded transmembrane segment spans residues 668-682 (WNLKFVLAFYTGVSV). Residues 683–724 (QTYYGRRKSENGKGNGVRSGALVIDGVLVGRGWSEDAKKNTG) lie on the Extracellular; loop L6 side of the membrane. Residues 725-736 (DLLLHHWIEFRW) form a beta stranded membrane-spanning segment. Residues 737–741 (PLAHG) are Periplasmic-facing. A beta stranded transmembrane segment spans residues 742 to 756 (IVSFDFFFDAAMVYN). At 757-786 (IESQSPNGSSSASSSSSSSSSSSRTTSSEG) the chain is on the extracellular; loop L7 side. The segment at 761–785 (SPNGSSSASSSSSSSSSSSRTTSSE) is disordered. Over residues 765-784 (SSSASSSSSSSSSSSRTTSS) the composition is skewed to low complexity. The beta stranded transmembrane segment at 787–799 (LYKMSYGPGLRFT) threads the bilayer. Residues 800 to 802 (LPQ) are Periplasmic-facing. Residues 803–814 (FPLKLAFANTFT) form a beta stranded membrane-spanning segment. Residues 815–824 (SPGGIPKTKK) are Extracellular; loop L8-facing. A beta stranded transmembrane segment spans residues 825 to 829 (NWNFV). The Periplasmic segment spans residues 830–837 (LSFTVNNL).

Belongs to the BamA family. As to quaternary structure, part of 2 complexes of about 239 and 164 kDa.

Its subcellular location is the cell outer membrane. Might be part of the outer membrane protein assembly complex, which is involved in assembly and insertion of beta-barrel proteins into the outer membrane. Its function is as follows. Both rabbit immune serum and rabbit antiserum specific for extracytoplasmic loop L4 promote bacteria internalization by rabbit peritoneal macrophages. Pools of human syphilitic sera from the USA and Columbia recognize both the N-terminal POTRA-containing and C-terminal beta-barrel domains as well as loop L4, showing this protein stimulates the immune system in both humans and rabbits. This chain is Putative outer membrane protein assembly factor TP_0326 (tp92), found in Treponema pallidum (strain Nichols).